Reading from the N-terminus, the 37-residue chain is Large ribosomal subunit protein bL36 (37 aa).

It belongs to the bacterial ribosomal protein bL36 family.

The sequence is that of Large ribosomal subunit protein bL36 from Deinococcus deserti (strain DSM 17065 / CIP 109153 / LMG 22923 / VCD115).